A 455-amino-acid chain; its full sequence is Hexokinase-2 (455 aa).

The region spanning 3 to 445 (ANFQQAVKKL…SGIGAALCAL (443 aa)) is the Hexokinase domain. A hexokinase small subdomain region spans residues 57–195 (TGAETGDFLA…NLPIRIEAVI (139 aa)). Residue 68 to 73 (DFGGTN) coordinates ATP. Substrate contacts are provided by residues 144–145 (SY), 161–162 (TK), and 196–197 (ND). The segment at 196-434 (NDTVGTLVTR…KLISIGIAKD (239 aa)) is hexokinase large subdomain. T222 contacts ATP. Substrate contacts are provided by N225, E252, and E283. ATP contacts are provided by residues 288–289 (GM), 325–329 (TSVLS), and 400–404 (SLVEH).

The protein belongs to the hexokinase family. As to quaternary structure, monomer.

It carries out the reaction a D-hexose + ATP = a D-hexose 6-phosphate + ADP + H(+). It catalyses the reaction D-mannose + ATP = D-mannose 6-phosphate + ADP + H(+). The catalysed reaction is D-fructose + ATP = D-fructose 6-phosphate + ADP + H(+). The enzyme catalyses D-glucose + ATP = D-glucose 6-phosphate + ADP + H(+). It participates in carbohydrate metabolism; hexose metabolism. It functions in the pathway carbohydrate degradation; glycolysis; D-glyceraldehyde 3-phosphate and glycerone phosphate from D-glucose: step 1/4. Functionally, catalyzes the phosphorylation of hexose (six-carbon sugars) to hexose 6-phosphate. Phosphorylates D-glucose, D-fructose and D-mannose. Compared to hxk1, has a much higher affinity for D-glucose. Constitutes the initial enzyme of glycolysis by catalyzing the phosphorylation of glucose to D-glucose 6-phosphate. This Schizosaccharomyces pombe (strain 972 / ATCC 24843) (Fission yeast) protein is Hexokinase-2.